The sequence spans 75 residues: DNA-directed RNA polymerase subunit omega (75 aa).

It belongs to the RNA polymerase subunit omega family. As to quaternary structure, in cyanobacteria the RNAP catalytic core is composed of 2 alpha, 1 beta, 1 beta', 1 gamma and 1 omega subunit. When a sigma factor is associated with the core the holoenzyme is formed, which can initiate transcription.

The enzyme catalyses RNA(n) + a ribonucleoside 5'-triphosphate = RNA(n+1) + diphosphate. Its function is as follows. Promotes RNA polymerase assembly. Latches the N- and C-terminal regions of the beta' subunit thereby facilitating its interaction with the beta and alpha subunits. The polypeptide is DNA-directed RNA polymerase subunit omega (Gloeothece citriformis (strain PCC 7424) (Cyanothece sp. (strain PCC 7424))).